A 226-amino-acid chain; its full sequence is Ribose-5-phosphate isomerase A (226 aa).

Residues 33–36 (TGST), 86–89 (DGAD), and 99–102 (KGGG) each bind substrate. Glu-108 functions as the Proton acceptor in the catalytic mechanism. Substrate is bound at residue Lys-126.

Belongs to the ribose 5-phosphate isomerase family. As to quaternary structure, homodimer.

It carries out the reaction aldehydo-D-ribose 5-phosphate = D-ribulose 5-phosphate. It functions in the pathway carbohydrate degradation; pentose phosphate pathway; D-ribose 5-phosphate from D-ribulose 5-phosphate (non-oxidative stage): step 1/1. Its function is as follows. Catalyzes the reversible conversion of ribose-5-phosphate to ribulose 5-phosphate. In Bordetella bronchiseptica (strain ATCC BAA-588 / NCTC 13252 / RB50) (Alcaligenes bronchisepticus), this protein is Ribose-5-phosphate isomerase A.